The chain runs to 563 residues: Dihydroxy-acid dehydratase (563 aa).

Aspartate 79 contacts Mg(2+). Cysteine 120 is a binding site for [2Fe-2S] cluster. Mg(2+)-binding residues include aspartate 121 and lysine 122. At lysine 122 the chain carries N6-carboxylysine. A [2Fe-2S] cluster-binding site is contributed by cysteine 193. Glutamate 451 lines the Mg(2+) pocket. The active-site Proton acceptor is serine 477.

This sequence belongs to the IlvD/Edd family. As to quaternary structure, homodimer. [2Fe-2S] cluster is required as a cofactor. It depends on Mg(2+) as a cofactor.

The enzyme catalyses (2R)-2,3-dihydroxy-3-methylbutanoate = 3-methyl-2-oxobutanoate + H2O. It carries out the reaction (2R,3R)-2,3-dihydroxy-3-methylpentanoate = (S)-3-methyl-2-oxopentanoate + H2O. It functions in the pathway amino-acid biosynthesis; L-isoleucine biosynthesis; L-isoleucine from 2-oxobutanoate: step 3/4. It participates in amino-acid biosynthesis; L-valine biosynthesis; L-valine from pyruvate: step 3/4. Functionally, functions in the biosynthesis of branched-chain amino acids. Catalyzes the dehydration of (2R,3R)-2,3-dihydroxy-3-methylpentanoate (2,3-dihydroxy-3-methylvalerate) into 2-oxo-3-methylpentanoate (2-oxo-3-methylvalerate) and of (2R)-2,3-dihydroxy-3-methylbutanoate (2,3-dihydroxyisovalerate) into 2-oxo-3-methylbutanoate (2-oxoisovalerate), the penultimate precursor to L-isoleucine and L-valine, respectively. This Sulfurovum sp. (strain NBC37-1) protein is Dihydroxy-acid dehydratase.